Consider the following 132-residue polypeptide: Small ribosomal subunit protein uS8 (132 aa).

This sequence belongs to the universal ribosomal protein uS8 family. Part of the 30S ribosomal subunit. Contacts proteins S5 and S12.

One of the primary rRNA binding proteins, it binds directly to 16S rRNA central domain where it helps coordinate assembly of the platform of the 30S subunit. The protein is Small ribosomal subunit protein uS8 of Streptomyces griseus subsp. griseus (strain JCM 4626 / CBS 651.72 / NBRC 13350 / KCC S-0626 / ISP 5235).